A 78-amino-acid polypeptide reads, in one-letter code: Acyl carrier protein (78 aa).

Residues 1–75 (MIKEKILSIV…DLISVVKNST (75 aa)) form the Carrier domain. Residue Ser35 is modified to O-(pantetheine 4'-phosphoryl)serine.

This sequence belongs to the acyl carrier protein (ACP) family. 4'-phosphopantetheine is transferred from CoA to a specific serine of apo-ACP by AcpS. This modification is essential for activity because fatty acids are bound in thioester linkage to the sulfhydryl of the prosthetic group.

Its subcellular location is the cytoplasm. The protein operates within lipid metabolism; fatty acid biosynthesis. Functionally, carrier of the growing fatty acid chain in fatty acid biosynthesis. This Shigella flexneri protein is Acyl carrier protein (acpP).